Consider the following 73-residue polypeptide: Conotoxin Bt11.1 (73 aa).

An N-terminal signal peptide occupies residues 1–20 (MKLCVAFLLVLVILPSVIGG). The propeptide occupies 21–35 (KPSERTLSGATRRGD). 4 disulfide bridges follow: Cys-39–Cys-53, Cys-46–Cys-58, Cys-52–Cys-63, and Cys-57–Cys-70.

Belongs to the conotoxin I1 superfamily. In terms of tissue distribution, expressed by the venom duct.

It is found in the secreted. This is Conotoxin Bt11.1 from Conus betulinus (Beech cone).